The sequence spans 90 residues: UPF0223 protein lwe1035 (90 aa).

It belongs to the UPF0223 family.

The sequence is that of UPF0223 protein lwe1035 from Listeria welshimeri serovar 6b (strain ATCC 35897 / DSM 20650 / CCUG 15529 / CIP 8149 / NCTC 11857 / SLCC 5334 / V8).